The primary structure comprises 175 residues: Zinc metalloproteinase-disintegrin-like catroriarin (175 aa).

A Disintegrin domain is found at 1 to 63 (NPCCDAATCK…ECPADVFHKN (63 aa)). Disulfide bonds link Cys3-Cys26, Cys17-Cys23, Cys22-Cys48, Cys35-Cys55, Cys42-Cys74, Cys67-Cys79, Cys101-Cys147, Cys114-Cys124, and Cys131-Cys171. The D/ECD-tripeptide signature appears at 41 to 43 (ECD). Residues Asp43, Pro44, Glu46, Asp58, and Val59 each coordinate Ca(2+).

The protein belongs to the venom metalloproteinase (M12B) family. P-III subfamily. P-IIIa sub-subfamily. In terms of assembly, monomer. The cofactor is Zn(2+). Glycosylated. As to expression, expressed by the venom gland.

It is found in the secreted. In terms of biological role, snake venom metalloproteinase that impairs hemostasis in the envenomed animal. The polypeptide is Zinc metalloproteinase-disintegrin-like catroriarin (Crotalus atrox (Western diamondback rattlesnake)).